Consider the following 185-residue polypeptide: Lectin B4 (185 aa).

Asn48 carries N-linked (GlcNAc...) asparagine glycosylation. Positions 111 and 113 each coordinate Mn(2+). Residues Asp113, Tyr115, Asn117, and Asp120 each coordinate Ca(2+). Mn(2+) is bound at residue Asp120. N-linked (GlcNAc...) asparagine glycosylation occurs at Asn122. His125 contacts Mn(2+).

Belongs to the leguminous lectin family. Homo- or heterotetramer. V.villosa isolectins are composed of either two subunits a and two subunits B (A2B2), four subunits A (A4), or four subunits B (B4). The predominant form, isolectin B4, has no A1 erythrocyte agglutinating activity.

Its function is as follows. N-acetyl-D-galactosamine specific lectin. Binds the Tn determinant (GalNAc-alpha-O-Ser/Thr) of the tumor-associated glycopeptide. Could be required for agglutinating cells such as Tn-exposed erythrocytes. This Vicia villosa (Hairy vetch) protein is Lectin B4.